A 204-amino-acid polypeptide reads, in one-letter code: FlaA locus 22.9 kDa protein (204 aa).

The segment at 115 to 140 (EKTAEDQKKSSEDHTEGSADSKASSE) is disordered.

The protein is FlaA locus 22.9 kDa protein (ylxF) of Bacillus subtilis (strain 168).